The chain runs to 202 residues: Transmembrane 4 L6 family member 1 (202 aa).

At 1 to 9 (MCYVKCARY) the chain is on the cytoplasmic side. The chain crosses the membrane as a helical span at residues 10–30 (IGYSLVWAAVFCIVANALLYF). The Extracellular portion of the chain corresponds to 31-49 (PNGETKYATEDHLSRFVWY). The helical transmembrane segment at 50 to 70 (FAGIVGGGLLMLLPAFVFIGM) threads the bilayer. At 71–93 (DEEDCCGCCGYENYGKRCSMLSS) the chain is on the cytoplasmic side. Residues 94–114 (VLAALIGIVGSAYCVIVASLG) form a helical membrane-spanning segment. The Extracellular segment spans residues 115–161 (LAEGPKCSDAHGVWNYTFASTEGQYLLNSSMWSKCYEPKHIVEWHVT). N129 and N142 each carry an N-linked (GlcNAc...) asparagine glycan. Residues 162-182 (LFSILLAFAAVEFILCLIQVI) traverse the membrane as a helical segment. Residues 183-202 (NGMLGGLCGYCCSRQQQYNC) lie on the Cytoplasmic side of the membrane.

The protein belongs to the L6 tetraspanin family. Present in high molecular weight complexes in tumor cells. Interacts with SDCBP2. As to expression, highly expressed in skin and lung. Moderately expressed in lymph nodes and kidneys. Also present in thymic stroma and fibroblasts.

The protein resides in the membrane. The sequence is that of Transmembrane 4 L6 family member 1 (Tm4sf1) from Mus musculus (Mouse).